The following is a 441-amino-acid chain: Trigger factor (441 aa).

A PPIase FKBP-type domain is found at 161–246 (GDQVTIDFVG…VSEVAEQILP (86 aa)).

Belongs to the FKBP-type PPIase family. Tig subfamily.

It is found in the cytoplasm. The enzyme catalyses [protein]-peptidylproline (omega=180) = [protein]-peptidylproline (omega=0). Involved in protein export. Acts as a chaperone by maintaining the newly synthesized protein in an open conformation. Functions as a peptidyl-prolyl cis-trans isomerase. The protein is Trigger factor of Marinomonas sp. (strain MWYL1).